Here is a 743-residue protein sequence, read N- to C-terminus: Tudor domain-containing protein 3 (743 aa).

A disordered region spans residues 241 to 262; sequence KTFGGGGGGARSNLNIGAAGHR. Positions 286–326 constitute a UBA domain; the sequence is LVDEKALKHITEMGFSKEASRQALMDNANNLEAALNVLLNS. Disordered regions lie at residues 327–365 and 380–549; these read SKQK…APST and EEPK…CYER. A Phosphoserine modification is found at Ser349. Basic and acidic residues predominate over residues 414-431; the sequence is PRNDTRQPRNERPPRFQK. Polar residues predominate over residues 432 to 445; it reads DTPTSKSTVENSVL. Ser438 carries the phosphoserine modification. Basic and acidic residues-rich tracts occupy residues 464 to 484 and 536 to 549; these read AEER…KDAS and RENQ…CYER. A Glycyl lysine isopeptide (Lys-Gly) (interchain with G-Cter in SUMO2) cross-link involves residue Lys563. Residues 572–603 form a disordered region; the sequence is TDYPRPVQSNSLGVPNGETAPPLKGRRVGPIK. Positions 647–707 constitute a Tudor domain; that stretch reads VWKPGDECFA…KPVQTEAWEE (61 aa). The segment covering 711–725 has biased composition (basic and acidic residues); the sequence is YDHTIEFRRGGDGQP. The disordered stretch occupies residues 711–743; it reads YDHTIEFRRGGDGQPRRSTRPTQQFYQPPRARN. Residues 723-743 are EBM motif; may mediate interaction with the EJC; the sequence is GQPRRSTRPTQQFYQPPRARN.

As to quaternary structure, component of mRNA stress granules. Interacts with FMR1, FXR1, FXR2, EWSR1, FUS, SERBP1, EEF1A1 and DDX3X or DDX3Y, and with the small nuclear ribonucleoprotein-associated proteins SNRPB and SNRPN. Interacts with 'Lys-48'-linked tetra-ubiquitin, but not with monoubiquitin or 'Lys-63'-linked ubiquitin chains. May interact with the exon junction complex (EJC) composed at least of CASC3, EIF4A3, MAGOH and RBM8A. Interacts with POLR2A (via the C-terminal domain (CTD)).

It localises to the cytoplasm. The protein localises to the nucleus. Scaffolding protein that specifically recognizes and binds dimethylarginine-containing proteins. Plays a role in the regulation of translation of target mRNAs by binding Arg/Gly-rich motifs (GAR) in dimethylarginine-containing proteins. In nucleus, acts as a coactivator: recognizes and binds asymmetric dimethylation on the core histone tails associated with transcriptional activation (H3R17me2a and H4R3me2a) and recruits proteins at these arginine-methylated loci. In cytoplasm, acts as an antiviral factor that participates in the assembly of stress granules together with G3BP1. The protein is Tudor domain-containing protein 3 (Tdrd3) of Mus musculus (Mouse).